Reading from the N-terminus, the 371-residue chain is ADP-ribosylarginine hydrolase Tri1 (371 aa).

The interval 1 to 61 (MIDLRSPNAL…LQSRACTLTP (61 aa)) is N-terminal extension. The ADP-ribosyl hydrolase domain stretch occupies residues 70-362 (GALLGLAIGD…LFDRAPQVDE (293 aa)). The Mg(2+) site is built by Thr112, Asp113, Asp114, Asp157, and Asp313.

The protein belongs to the ADP-ribosylglycohydrolase family. Mg(2+) is required as a cofactor.

It carries out the reaction N(omega)-(ADP-D-ribosyl)-L-arginyl-[protein] + H2O = ADP-D-ribose + L-arginyl-[protein]. Its function is as follows. Immunity component of an interbacterial competition system (also called effector-immunity systems). Expression in E.coli neutralizes the toxic effects of non-cognate S.proteamaculans effector protein Tre1 (Tre1-Sp); cannot be co-purified with Tre1-Sp from E.coli, suggesting they do not form a stable complex. Probably acts as an arginine mono-ADP-ribosylhydrolase, mediating the removal of mono-ADP-ribose attached to arginine residues on proteins. Probably de-ADP-ribosylates FtsZ and possibly other proteins; the ability to hydrolyze ADP-ribosyl moieties is not essential for neutralization of its cognate toxin, strongly suggesting its N-terminal extension occludes the active site of cognate toxin Tre1. The polypeptide is ADP-ribosylarginine hydrolase Tri1 (Pseudomonas putida (strain GB-1)).